The following is a 567-amino-acid chain: Sensor histidine kinase MtrB (567 aa).

The span at 1–15 (MIFGSRRRIRGRRGR) shows a compositional bias: basic residues. The tract at residues 1–20 (MIFGSRRRIRGRRGRSGPMT) is disordered. 2 consecutive transmembrane segments (helical) span residues 42–62 (VVAL…FVLT) and 213–233 (GTMA…ALLV). The region spanning 235-287 (RQVVVPVRSASRIAERFAEGHLSERMPVRGEDDMARLAVSFNDMAESLSRQIA) is the HAMP domain. A Histidine kinase domain is found at 302–519 (DVSHELRTPL…CFRLTLPMVR (218 aa)). Position 305 is a phosphohistidine; by autocatalysis (His-305). Positions 529 to 551 (PMKPIPQPVLQPVAQPNPQPMPP) are enriched in pro residues. A disordered region spans residues 529–567 (PMKPIPQPVLQPVAQPNPQPMPPEYKERQRPREHAEWSG). A compositionally biased stretch (basic and acidic residues) spans 552-567 (EYKERQRPREHAEWSG).

Interacts with MrtA. Interacts with LpqB, probably extracytoplasmically via MtrB's sensor domain. The cofactor is Mg(2+). Ca(2+) serves as cofactor. The C-terminal domain (residues 234-567) autophosphorylates.

The protein resides in the cell membrane. The enzyme catalyses ATP + protein L-histidine = ADP + protein N-phospho-L-histidine.. With respect to regulation, ca(2+) ions inhibit the phosphotransfer from MtrB to MtrA. Its function is as follows. Member of the two-component regulatory system MtrA/MtrB. Probably functions as a membrane-associated protein kinase that phosphorylates MtrA in response to environmental signals. Autophosphorylates and transfers phosphate to MtrA in vitro. Overexpression of MtrA alone decreases bacterial virulence in mouse infection; co-expression of MtrA and MtrB restores normal bacterial growth, suggesting that bacterial growth in macrophages requires an optimal ratio of MtrB to MtrA. Probably plays a role in cell division. In Mycobacterium tuberculosis (strain ATCC 25618 / H37Rv), this protein is Sensor histidine kinase MtrB (mtrB).